A 306-amino-acid chain; its full sequence is Recombination-associated protein RdgC (306 aa).

This sequence belongs to the RdgC family.

It localises to the cytoplasm. The protein localises to the nucleoid. In terms of biological role, may be involved in recombination. This Burkholderia ambifaria (strain MC40-6) protein is Recombination-associated protein RdgC.